Here is a 1011-residue protein sequence, read N- to C-terminus: Protein argonaute 1C (1011 aa).

Over residues 1 to 11 (MASRRPTHRHH) the composition is skewed to basic residues. Disordered regions lie at residues 1–95 (MASR…SPLA) and 107–147 (RPSE…PLRP). Composition is skewed to low complexity over residues 28-53 (ARYAQPQPQPQQQQQQQGRGCRARGA) and 61-92 (QQQQQQPRSTPTRATTVTVASSSSTTATASSS). Residues 127 to 140 (ATTTPHHIPSSSKS) are compositionally biased toward polar residues. A PAZ domain is found at 352-462 (PVIDFVAQLL…LPMEVCKIVE (111 aa)). A Piwi domain is found at 638–959 (LLIGILPDNN…AAFRARFYME (322 aa)). A compositionally biased stretch (low complexity) spans 963-982 (SDSSSVVSGPGVRGPLSGSS). Residues 963 to 994 (SDSSSVVSGPGVRGPLSGSSTSRTRAPGGAAV) form a disordered region.

The protein belongs to the argonaute family. Ago subfamily.

Its function is as follows. Probably involved in the RNA silencing pathway. May bind to short RNAs such as microRNAs (miRNAs) or short interfering RNAs (siRNAs), and represses the translation of mRNAs which are complementary to them. This is Protein argonaute 1C (AGO1C) from Oryza sativa subsp. japonica (Rice).